Consider the following 232-residue polypeptide: tRNA1(Val) (adenine(37)-N6)-methyltransferase (232 aa).

This sequence belongs to the methyltransferase superfamily. tRNA (adenine-N(6)-)-methyltransferase family.

Its subcellular location is the cytoplasm. It carries out the reaction adenosine(37) in tRNA1(Val) + S-adenosyl-L-methionine = N(6)-methyladenosine(37) in tRNA1(Val) + S-adenosyl-L-homocysteine + H(+). Specifically methylates the adenine in position 37 of tRNA(1)(Val) (anticodon cmo5UAC). This is tRNA1(Val) (adenine(37)-N6)-methyltransferase from Haemophilus influenzae (strain ATCC 51907 / DSM 11121 / KW20 / Rd).